The sequence spans 405 residues: L-carnitine CoA-transferase (405 aa).

Residues Lys97 and Arg104 each contribute to the CoA site. Asp169 (nucleophile) is an active-site residue.

It belongs to the CoA-transferase III family. CaiB subfamily. Homodimer.

The protein localises to the cytoplasm. It catalyses the reaction crotonobetainyl-CoA + (R)-carnitine = crotonobetaine + (R)-carnitinyl-CoA. The enzyme catalyses 4-(trimethylamino)butanoyl-CoA + (R)-carnitine = (R)-carnitinyl-CoA + 4-(trimethylamino)butanoate. It participates in amine and polyamine metabolism; carnitine metabolism. Its function is as follows. Catalyzes the reversible transfer of the CoA moiety from gamma-butyrobetainyl-CoA to L-carnitine to generate L-carnitinyl-CoA and gamma-butyrobetaine. Is also able to catalyze the reversible transfer of the CoA moiety from gamma-butyrobetainyl-CoA or L-carnitinyl-CoA to crotonobetaine to generate crotonobetainyl-CoA. The sequence is that of L-carnitine CoA-transferase from Escherichia coli O127:H6 (strain E2348/69 / EPEC).